Reading from the N-terminus, the 276-residue chain is Secreted RxLR effector protein 85 (276 aa).

A signal peptide spans 1–27 (MRYCAFRLGLFFIGYSCCVLLSTPTLA). Residues 110-113 (RQLR) carry the RxLR motif.

It belongs to the RxLR effector family.

It is found in the secreted. The protein resides in the host cell membrane. Secreted effector that partially suppresses the host cell death induced by cell death-inducing proteins. The polypeptide is Secreted RxLR effector protein 85 (Plasmopara viticola (Downy mildew of grapevine)).